Here is a 484-residue protein sequence, read N- to C-terminus: Toluene efflux pump outer membrane protein TtgC (484 aa).

A signal peptide spans 1–17 (MTKSLLSLAVTAFILGG). Cysteine 18 is lipidated: N-palmitoyl cysteine. Cysteine 18 carries the S-diacylglycerol cysteine lipid modification.

Belongs to the outer membrane factor (OMF) (TC 1.B.17) family.

The protein localises to the cell outer membrane. Its function is as follows. The outer membrane component of a constitutive organic solvent efflux system. Is involved in export of toluene, styrene, m-xylene, propylbenzene and ethylbenzene. Also exports AMP and the antibiotics carbenicillin, nalidixic acid, chloramphenicol and tetracycline. In Pseudomonas putida (strain DOT-T1E), this protein is Toluene efflux pump outer membrane protein TtgC (ttgC).